Consider the following 988-residue polypeptide: MASYTVESFVAQQLQLLELERDAEVEERRSWQEHSSLKELQSRGVCLLKLQVSGQRTGLYGQRLVTFEPRKFGPAVVLPSNSFTSGDIVGLYDTNESSQLATGVLTRITQKSVIVAFDESHDFQLNLDRENTYRLLKLANDVTYKRLKKALLTLKKYHSGPASSLIDVLLGGSTPSPATEIPPLTFYNTTLDPSQKEAVSFALAQKEVAIIHGPPGTGKTTTVVEIILQAVKQGLKVLCCAPSNIAVDNLVERLALCKKQILRLGHPARLLESVQQHSLDAVLARSDNAQIVADIRRDIDQVFGKNKKTQDKREKSNFRNEIKLLRKELKEREEAAIVQSLSAADVVLATNTGASTDGPLKLLPEDYFDVVVVDECAQALEASCWIPLLKAPKCILAGDHKQLPPTTVSHKAALAGLSRSLMERLAEKHGAAVVRMLAVQYRMHQAITRWASEAMYHGQLTAHPSVAGHLLKDLPGVADTEETSVPLLLIDTAGCGLLELEEEDSQSKGNPGEVRLVTLHIQALVDAGVQAGDIAVIAPYNLQVDLLRQSLSNKHPELEIKSVDGFQGREKEAVILTFVRSNRKGEVGFLAEDRRINVAVTRARRHVAVICDSHTVNNHAFLKTLVDYFTEHGEVRTAFEYLDDIVPENYTHEGSRSHSCAPKPKCPTTSVRKPASAQESRQEARAATGHSRRKPSEKPLGSQVQPQHSSKANGSDRTGGTDRTEHFRAMIEEFVASKEAQLEFPTSLSSHDRLRVHQLAEEFGLKHDSTGEGKARHITVSRRSPAGSGSATPQPPSPPSPAQAEPEPQVEQPVGQPHGSTQLDLKALHLERLQRQQGCQAQSQLGGGSRPQKAPQKKKKKEPKGPAMALPSEEDFDALVSAVVKADNTCSFTKCSASTTTLGQFCMHCSRRYCLSHHLPEIHGCGEKARAHARQRISREGVLYAGSGTKDRALDPAKRAQLQRKLDKKLGELSSQRTSKKKEKERGT.

A2 carries the N-acetylalanine modification. Residues 213 to 220 (GPPGTGKT), Q402, Y441, and E570 contribute to the ATP site. The tract at residues 637 to 783 (TAFEYLDDIV…KARHITVSRR (147 aa)) is SS DNA-binding. 3 disordered regions span residues 651–722 (THEG…GGTD), 765–820 (LKHD…PHGS), and 835–872 (RQQG…ALPS). A compositionally biased stretch (polar residues) spans 702–718 (SQVQPQHSSKANGSDRT). Positions 721 to 784 (TDRTEHFRAM…ARHITVSRRS (64 aa)) constitute an R3H domain. The span at 765–775 (LKHDSTGEGKA) shows a compositional bias: basic and acidic residues. A phosphoserine mark is found at S797 and S800. A compositionally biased stretch (low complexity) spans 802 to 817 (AQAEPEPQVEQPVGQP). The segment covering 835 to 844 (RQQGCQAQSQ) has biased composition (polar residues). The short motif at 857-861 (KKKKK) is the Nuclear localization signal element. The segment at 884–933 (VKADNTCSFTKCSASTTTLGQFCMHCSRRYCLSHHLPEIHGCGEKARAHA) adopts an AN1-type zinc-finger fold. Residues C890, C895, C906, C909, C914, H917, H923, and C925 each coordinate Zn(2+). The tract at residues 943 to 988 (LYAGSGTKDRALDPAKRAQLQRKLDKKLGELSSQRTSKKKEKERGT) is disordered. A compositionally biased stretch (basic and acidic residues) spans 949-971 (TKDRALDPAKRAQLQRKLDKKLG). A coiled-coil region spans residues 957–986 (AKRAQLQRKLDKKLGELSSQRTSKKKEKER).

It belongs to the DNA2/NAM7 helicase family. In terms of assembly, homooligomer. Interacts with RUVBL1. Interacts with RUVBL2. Interacts with GTF3C1. Interacts with ABT1. Interacts with ribosomes. As to expression, expressed in liver, skin, muscle, heart, brain, spleen and kidney.

It localises to the nucleus. The protein localises to the cytoplasm. The protein resides in the cell projection. Its subcellular location is the axon. It carries out the reaction ATP + H2O = ADP + phosphate + H(+). 5' to 3' helicase that unwinds RNA and DNA duplexes in an ATP-dependent reaction. Specific to 5'-phosphorylated single-stranded guanine-rich sequences. May play a role in RNA metabolism, ribosome biogenesis or initiation of translation. May play a role in regulation of transcription. Interacts with tRNA-Tyr. This Rattus norvegicus (Rat) protein is DNA-binding protein SMUBP-2 (Ighmbp2).